The following is a 724-amino-acid chain: 1,4-alpha-glucan branching enzyme GlgB 1 (724 aa).

The Nucleophile role is filled by Asp403. The active-site Proton donor is Glu456.

This sequence belongs to the glycosyl hydrolase 13 family. GlgB subfamily. In terms of assembly, monomer.

The catalysed reaction is Transfers a segment of a (1-&gt;4)-alpha-D-glucan chain to a primary hydroxy group in a similar glucan chain.. The protein operates within glycan biosynthesis; glycogen biosynthesis. Its function is as follows. Catalyzes the formation of the alpha-1,6-glucosidic linkages in glycogen by scission of a 1,4-alpha-linked oligosaccharide from growing alpha-1,4-glucan chains and the subsequent attachment of the oligosaccharide to the alpha-1,6 position. This chain is 1,4-alpha-glucan branching enzyme GlgB 1 (glgB1), found in Xanthomonas axonopodis pv. citri (strain 306).